The primary structure comprises 881 residues: MAAPGAPAEYGYIRTVLGQQILGQLDSSSLALPSEAKLKLAGSSGRGGQTVKSLRIQEQVQQTLARKGRSSVGNGNLHRTSSVPEYVYNLHLVENDFVGGRSPVPKTYDMLKAGTTATYEGRWGRGTAQYSSQKSVEERSLRHPLRRLEISPDSSPERAHYTHSDYQYSQRSQAGHTLHHQESRRAALLVPPRYARSEIVGVSRAGTTSRQRHFDTYHRQYQHGSVSDTVFDSIPANPALLTYPRPGTSRSMGNLLEKENYLTAGLTVGQVRPLVPLQPVTQNRASRSSWHQSSFHSTRTLREAGPSVAVDSSGRRAHLTVGQAAAGGSGNLLTERSTFTDSQLGNADMEMTLERAVSMLEADHMLPSRISAAATFIQHECFQKSEARKRVNQLRGILKLLQLLKVQNEDVQRAVCGALRNLVFEDNDNKLEVAELNGVPRLLQVLKQTRDLETKKQITDHTVNLRSRNGWPGAVAHACNPSTLGGQGGRITRSGVRDQPDQHGLLWNLSSNDKLKNLMITEALLTLTENIIIPFSGWPEGDYPKANGLLDFDIFYNVTGCLRNMSSAGADGRKAMRRCDGLIDSLVHYVRGTIADYQPDDKATENCVCILHNLSYQLEAELPEKYSQNIYIQNRNIQTDNNKSIGCFGSRSRKVKEQYQDVPMPEEKSNPKGVEWLWHSIVIRMYLSLIAKSVRNYTQEASLGALQNLTAGSGPMPTSVAQTVVQKESGLQHTRKMLHVGDPSVKKTAISLLRNLSRNLSLQNEIAKETLPDLVSIIPDTVPSTDLLIETTASACYTLNNIIQNSYQNARDLLNTGGIQKIMAISAGDAYASNKASKAASVLLYSLWAHTELHHAYKKAQFKKTDFVNSRTAKAYHSLKD.

The segment at 1-348 (MAAPGAPAEY…FTDSQLGNAD (348 aa)) is required for interaction with influenza A virus RNA polymerase subunit PB1. The segment at 1–360 (MAAPGAPAEY…MTLERAVSML (360 aa)) is required for binding to single-stranded DNA. S44 bears the Phosphoserine mark. The residue at position 46 (R46) is an Omega-N-methylarginine. S82 is subject to Phosphoserine; by MARK3. A phosphoserine mark is found at S132, S135, S151, S154, S155, S169, and S172. Position 177 is a phosphothreonine (T177). Phosphoserine occurs at positions 183, 197, 251, 294, and 329. The tract at residues 282–314 (QNRASRSSWHQSSFHSTRTLREAGPSVAVDSSG) is disordered. The span at 286 to 297 (SRSSWHQSSFHS) shows a compositional bias: low complexity. 8 ARM repeats span residues 341–383 (DSQL…ECFQ), 385–424 (SEARKRVNQLRGILKLLQLLKVQNEDVQRAVCGALRNLVF), 427–467 (NDNK…NLRS), 571–616 (DGRK…NLSY), 671–711 (PKGV…NLTA), 719–758 (SVAQTVVQKESGLQHTRKMLHVGDPSVKKTAISLLRNLSR), 763–804 (QNEI…NIIQ), and 807–849 (YQNA…SLWA).

Belongs to the beta-catenin family. Interacts with DSC2. Interacts with JUP. Interacts with KRT5/CK5, KRT8/CK8, KRT14/CK14, KRT18/CK18 and VIM. Interacts (via N-terminus) with MARK3/C-TAK1. Interacts with DSP. Interacts with DSG1, DSG2 and DSG3. Interacts (via N-terminus) with CTNNB1. Interacts with CDH1. Interacts with the RNA polymerase III (Pol III) complex proteins POLR3A/RPC155, POLR3F/RPC39 and POLR3C/RPC82. Interacts with CTNNA3. Interacts (via N-terminus) with SCN5A/Nav1.5. Interacts with ANK3/ANKG and GJA1/CX43. As to quaternary structure, (Microbial infection) Interacts (via N-terminus) with influenza A virus RNA polymerase subunit PB1 (via C-terminus); the interaction competitively inhibits the interaction between the subunits PB1 and PB2. As to expression, expressed at intercalated disks in the heart (at protein level). Expressed in gingival epithelial, endothelial and fibroblast cells (at protein level). Faintly expressed in tracheal epithelial cells (at protein level). Widely expressed. Found at desmosomal plaques in simple and stratified epithelia and in non-epithelial tissues such as myocardium and lymph node follicles. In most stratified epithelia found in the desmosomes of the basal cell layer and seems to be absent from suprabasal strata. In terms of tissue distribution, (Microbial infection) Abundantly expressed in tracheal epithelial cells following influenza A virus infection (at protein level).

It is found in the nucleus. The protein resides in the cell junction. Its subcellular location is the desmosome. The protein localises to the cytoplasm. A component of desmosome cell-cell junctions which are required for positive regulation of cellular adhesion. Regulates focal adhesion turnover resulting in changes in focal adhesion size, cell adhesion and cell spreading, potentially via transcriptional modulation of beta-integrins. Required to maintain gingival epithelial barrier function. Important component of the desmosome that is also required for localization of desmosome component proteins such as DSC2, DSG2 and JUP to the desmosome cell-cell junction. Required for the formation of desmosome cell junctions in cardiomyocytes, thereby required for the correct formation of the heart, specifically trabeculation and formation of the atria walls. Loss of desmosome cell junctions leads to mis-localization of DSP and DSG2 resulting in disruption of cell-cell adhesion and disordered intermediate filaments. Modulates profibrotic gene expression in cardiomyocytes via regulation of DSP expression and subsequent activation of downstream TGFB1 and MAPK14/p38 MAPK signaling. Required for cardiac sodium current propagation and electrical synchrony in cardiac myocytes, via ANK3 stabilization and modulation of SCN5A/Nav1.5 localization to cell-cell junctions. Required for mitochondrial function, nuclear envelope integrity and positive regulation of SIRT3 transcription via maintaining DES localization at its nuclear envelope and cell tip anchoring points, and thereby preserving regulation of the transcriptional program. Maintenance of nuclear envelope integrity protects against DNA damage and transcriptional dysregulation of genes, especially those involved in the electron transport chain, thereby preserving mitochondrial function and protecting against superoxide radical anion generation. Binds single-stranded DNA (ssDNA). May regulate the localization of GJA1 to gap junctions in intercalated disks of the heart. Involved in the inhibition of viral infection by influenza A viruses (IAV). Acts as a host restriction factor for IAV viral propagation, potentially via disrupting the interaction of IAV polymerase complex proteins. The polypeptide is Plakophilin-2 (Homo sapiens (Human)).